Here is a 229-residue protein sequence, read N- to C-terminus: Golgi to ER traffic protein 1 (229 aa).

Over 1–14 the chain is Lumenal; the sequence is MGILAALDLHPYTL. Residues 15-34 form a helical membrane-spanning segment; that stretch reads VVSSFTVLLIQQLVGFIGKS. At 35–122 the chain is on the cytoplasmic side; that stretch reads TIQEFAWLFY…KINSLVGVVL (88 aa). Residues 60–117 are a coiled coil; sequence HTKKQEELHKLNREKRSISAQDEYAKWTKLNRQAEKLTAEVKSLSDDIAKDKSKINSL. Residues 123–143 form a helical membrane-spanning segment; it reads LFLTTLPLWVFRLWFRKSVLF. Residues 144 to 167 lie on the Lumenal side of the membrane; that stretch reads YLPTGVFPYYVERVLAIPFFASGS. Residues 168–184 form a helical membrane-spanning segment; the sequence is VGLTVWMFAVNNVISSV. Topologically, residues 185 to 229 are cytoplasmic; sequence LFLLTFPFKPSVPIPIRQTKVEEVVPESAESKESSPEVIDIADAN. Residues 210 to 219 show a composition bias toward basic and acidic residues; that stretch reads PESAESKESS. A disordered region spans residues 210 to 229; sequence PESAESKESSPEVIDIADAN.

The protein belongs to the WRB/GET1 family. In terms of assembly, component of the Golgi to ER traffic (GET) complex, which is composed of GET1, GET2 and GET3. Within the complex, GET1 and GET2 form a heterotetramer which is stabilized by phosphatidylinositol binding and which binds to the GET3 homodimer.

Its subcellular location is the endoplasmic reticulum membrane. It is found in the golgi apparatus membrane. Required for the post-translational delivery of tail-anchored (TA) proteins to the endoplasmic reticulum. Together with GET2, acts as a membrane receptor for soluble GET3, which recognizes and selectively binds the transmembrane domain of TA proteins in the cytosol. The GET complex cooperates with the HDEL receptor ERD2 to mediate the ATP-dependent retrieval of resident ER proteins that contain a C-terminal H-D-E-L retention signal from the Golgi to the ER. The chain is Golgi to ER traffic protein 1 from Scheffersomyces stipitis (strain ATCC 58785 / CBS 6054 / NBRC 10063 / NRRL Y-11545) (Yeast).